We begin with the raw amino-acid sequence, 259 residues long: MENVYISSYSSNEQTSMAVAATNIRELLSQYVDDANLEDLIEWAMEKSSKYYIKNIGNTKSNIEETKFESKNNIGIEYSKDSRNKLSYRNKPFIATNLEYKTLCDMIKGTSGTEKEFLRYLLFGIKCIKKGVEYNIDKIKDVSYNDYFNVLNEKYNTPCPNCKSRNTTPMMIQTRAADEPPLVRHACRDCKQHFKPPKFRAFRNLNVTTQSIHKNKEITEILPDNNPSPPESPEPASPIDDGLIRVTFDRNDEPPEDDE.

The TFIIS-type zinc finger occupies Y155 to K195. Zn(2+) is bound by residues C159, C162, C187, and C190. Residues E220–E259 form a disordered region. Positions N226–A236 are enriched in pro residues.

This sequence belongs to the poxviridae DNA-directed RNA polymerase 30 kDa subunit family. In terms of assembly, the DNA-dependent RNA polymerase (vRNAP) consists of eight subunits encoded by early viral genes and termed according to their apparent molecular masses Rpo147, Rpo132, Rpo35, Rpo30, Rpo22, Rpo19, Rpo18, and Rpo7. The same holoenzyme, with the addition of the transcription-specificity factor RAP94, is used for early gene expression.

Its subcellular location is the virion. It localises to the host cytoplasm. It carries out the reaction RNA(n) + a ribonucleoside 5'-triphosphate = RNA(n+1) + diphosphate. Part of the DNA-dependent RNA polymerase which catalyzes the transcription of viral DNA into RNA using the four ribonucleoside triphosphates as substrates. Responsible for the transcription of early, intermediate and late genes. DNA-dependent RNA polymerase associates with the early transcription factor (ETF), itself composed of OPG118 and OPG134, thereby allowing the early genes transcription. Late transcription, and probably also intermediate transcription, require newly synthesized RNA polymerase. The polypeptide is DNA-directed RNA polymerase 30 kDa polypeptide (OPG066) (Variola virus (isolate Human/India/Ind3/1967) (VARV)).